Here is a 485-residue protein sequence, read N- to C-terminus: NADH-quinone oxidoreductase subunit N (485 aa).

The next 14 helical transmembrane spans lie at 8–28, 35–55, 71–91, 105–125, 127–147, 159–179, 203–223, 235–255, 271–291, 297–317, 326–346, 373–393, 408–430, and 455–475; these read LIAL…MLSI, FLNA…LWFV, GFAM…CTFA, FYLL…ANHL, ALFL…GYAF, YTIL…LVYA, LLAG…LVPF, PAPV…GVVM, VVLG…ALSQ, LLGY…IALQ, VGVY…VVSL, AAVM…LGFI, WWLV…RVAV, and IVVL…QPLI.

This sequence belongs to the complex I subunit 2 family. NDH-1 is composed of 13 different subunits. Subunits NuoA, H, J, K, L, M, N constitute the membrane sector of the complex.

Its subcellular location is the cell inner membrane. The enzyme catalyses a quinone + NADH + 5 H(+)(in) = a quinol + NAD(+) + 4 H(+)(out). In terms of biological role, NDH-1 shuttles electrons from NADH, via FMN and iron-sulfur (Fe-S) centers, to quinones in the respiratory chain. The immediate electron acceptor for the enzyme in this species is believed to be ubiquinone. Couples the redox reaction to proton translocation (for every two electrons transferred, four hydrogen ions are translocated across the cytoplasmic membrane), and thus conserves the redox energy in a proton gradient. This is NADH-quinone oxidoreductase subunit N from Salmonella gallinarum (strain 287/91 / NCTC 13346).